A 179-amino-acid chain; its full sequence is Large ribosomal subunit protein uL5 (179 aa).

Belongs to the universal ribosomal protein uL5 family. As to quaternary structure, part of the 50S ribosomal subunit; part of the 5S rRNA/L5/L18/L25 subcomplex. Contacts the 5S rRNA and the P site tRNA. Forms a bridge to the 30S subunit in the 70S ribosome.

Its function is as follows. This is one of the proteins that bind and probably mediate the attachment of the 5S RNA into the large ribosomal subunit, where it forms part of the central protuberance. In the 70S ribosome it contacts protein S13 of the 30S subunit (bridge B1b), connecting the 2 subunits; this bridge is implicated in subunit movement. Contacts the P site tRNA; the 5S rRNA and some of its associated proteins might help stabilize positioning of ribosome-bound tRNAs. This chain is Large ribosomal subunit protein uL5, found in Salmonella arizonae (strain ATCC BAA-731 / CDC346-86 / RSK2980).